Here is a 273-residue protein sequence, read N- to C-terminus: 2,3,4,5-tetrahydropyridine-2,6-dicarboxylate N-succinyltransferase (273 aa).

Substrate is bound by residues Arg104 and Asp141.

It belongs to the transferase hexapeptide repeat family. As to quaternary structure, homotrimer.

It is found in the cytoplasm. It catalyses the reaction (S)-2,3,4,5-tetrahydrodipicolinate + succinyl-CoA + H2O = (S)-2-succinylamino-6-oxoheptanedioate + CoA. Its pathway is amino-acid biosynthesis; L-lysine biosynthesis via DAP pathway; LL-2,6-diaminopimelate from (S)-tetrahydrodipicolinate (succinylase route): step 1/3. In Neisseria meningitidis serogroup A / serotype 4A (strain DSM 15465 / Z2491), this protein is 2,3,4,5-tetrahydropyridine-2,6-dicarboxylate N-succinyltransferase.